The following is a 108-amino-acid chain: E3 ubiquitin-protein ligase Midline-1 (108 aa).

One can recognise a B30.2/SPRY domain in the interval 1-100; sequence KSAPKHEWIG…IITGLPIPDH (100 aa).

This sequence belongs to the TRIM/RBCC family. Homodimer or heterodimer with MID2. Interacts with IGBP1.

The protein localises to the cytoplasm. The protein resides in the cytoskeleton. The catalysed reaction is S-ubiquitinyl-[E2 ubiquitin-conjugating enzyme]-L-cysteine + [acceptor protein]-L-lysine = [E2 ubiquitin-conjugating enzyme]-L-cysteine + N(6)-ubiquitinyl-[acceptor protein]-L-lysine.. Functionally, has E3 ubiquitin ligase activity towards IGBP1, promoting its monoubiquitination, which results in deprotection of the catalytic subunit of protein phosphatase PP2A, and its subsequent degradation by polyubiquitination. This chain is E3 ubiquitin-protein ligase Midline-1 (Mid1), found in Mus caroli (Ryukyu mouse).